Here is a 184-residue protein sequence, read N- to C-terminus: ATP synthase subunit b, chloroplastic (184 aa).

Residues 27–49 (LATNPINLSVVLGVLVFFGKGVL) traverse the membrane as a helical segment.

It belongs to the ATPase B chain family. F-type ATPases have 2 components, F(1) - the catalytic core - and F(0) - the membrane proton channel. F(1) has five subunits: alpha(3), beta(3), gamma(1), delta(1), epsilon(1). F(0) has four main subunits: a(1), b(1), b'(1) and c(10-14). The alpha and beta chains form an alternating ring which encloses part of the gamma chain. F(1) is attached to F(0) by a central stalk formed by the gamma and epsilon chains, while a peripheral stalk is formed by the delta, b and b' chains.

The protein resides in the plastid. It localises to the chloroplast thylakoid membrane. Functionally, f(1)F(0) ATP synthase produces ATP from ADP in the presence of a proton or sodium gradient. F-type ATPases consist of two structural domains, F(1) containing the extramembraneous catalytic core and F(0) containing the membrane proton channel, linked together by a central stalk and a peripheral stalk. During catalysis, ATP synthesis in the catalytic domain of F(1) is coupled via a rotary mechanism of the central stalk subunits to proton translocation. Its function is as follows. Component of the F(0) channel, it forms part of the peripheral stalk, linking F(1) to F(0). The protein is ATP synthase subunit b, chloroplastic of Phaseolus vulgaris (Kidney bean).